A 494-amino-acid polypeptide reads, in one-letter code: Tripartite motif-containing protein 5 (494 aa).

Ala-2 carries the N-acetylalanine modification. Residues 15–59 form an RING-type zinc finger; it reads CPICLELLTEPLSLDCGHSFCQACITANHKESMLHQGERSCPLCR. Residues 91–132 form a B box-type zinc finger; that stretch reads QNVDHCARHGEKLLLFCEQDGNIICWLCERSQEHRGHNTFLV. Residues Cys-96, His-99, Cys-118, and His-124 each coordinate Zn(2+). A coiled-coil region spans residues 132–223; the sequence is VEEVAQKYRE…RLVQSENDMV (92 aa). A required for interaction with GABARAP and for autophagy region spans residues 186 to 199; it reads FKQLRDILDCEESN. Residues 280–494 enclose the B30.2/SPRY domain; it reads PDLKRMLQVL…LPMTLCSPRS (215 aa).

The protein belongs to the TRIM/RBCC family. In terms of assembly, can form homodimers and homotrimers. In addition to lower-order dimerization, also exhibits a higher-order multimerization and both low- and high-order multimerizations are essential for its restriction activity. Interacts with BTBD1 and BTBD2. Interacts with PSMC4, PSMC5, PSMD7 and HSPA8/HSC70. Interacts (via B30.2/SPRY domain) with HSPA1A/B. Interacts with PSMC2, MAP3K7/TAK1, TAB2 and TAB3. Interacts with SQSTM1. Interacts with TRIM6 and TRIM34. Interacts with ULK1 (phosphorylated form), GABARAP, GABARAPL1, GABARAPL2, MAP1LC3A, MAP1LC3C and BECN1. Post-translationally, degraded in a proteasome-independent fashion in the absence of viral infection but in a proteasome-dependent fashion following exposure to restriction sensitive virus. In terms of processing, autoubiquitinated in a RING finger- and UBE2D2-dependent manner. Monoubiquitinated by TRIM21. Deubiquitinated by Yersinia YopJ. Ubiquitination may not lead to proteasomal degradation.

The protein resides in the cytoplasm. Its subcellular location is the nucleus. The catalysed reaction is S-ubiquitinyl-[E2 ubiquitin-conjugating enzyme]-L-cysteine + [acceptor protein]-L-lysine = [E2 ubiquitin-conjugating enzyme]-L-cysteine + N(6)-ubiquitinyl-[acceptor protein]-L-lysine.. It functions in the pathway protein modification; protein ubiquitination. Functionally, capsid-specific restriction factor that prevents infection from non-host-adapted retroviruses. Blocks viral replication early in the life cycle, after viral entry but before reverse transcription. In addition to acting as a capsid-specific restriction factor, also acts as a pattern recognition receptor that activates innate immune signaling in response to the retroviral capsid lattice. Binding to the viral capsid triggers its E3 ubiquitin ligase activity, and in concert with the heterodimeric ubiquitin conjugating enzyme complex UBE2V1-UBE2N (also known as UBC13-UEV1A complex) generates 'Lys-63'-linked polyubiquitin chains, which in turn are catalysts in the autophosphorylation of the MAP3K7/TAK1 complex (includes TAK1, TAB2, and TAB3). Activation of the MAP3K7/TAK1 complex by autophosphorylation results in the induction and expression of NF-kappa-B and MAPK-responsive inflammatory genes, thereby leading to an innate immune response in the infected cell. Restricts infection by simian immunodeficiency virus (SIV-mac). Plays a role in regulating autophagy through activation of autophagy regulator BECN1 by causing its dissociation from its inhibitors BCL2 and TAB2. This Saimiri sciureus (Common squirrel monkey) protein is Tripartite motif-containing protein 5 (TRIM5).